The primary structure comprises 482 residues: Hydroxymethylglutaryl-CoA synthase A (482 aa).

Glu-85 functions as the Proton donor/acceptor in the catalytic mechanism. Residue Cys-119 is the Acyl-thioester intermediate of the active site. 7 residues coordinate (3S)-3-hydroxy-3-methylglutaryl-CoA: Cys-119, Thr-161, Ser-211, His-249, Lys-258, Asn-325, and Ser-358. The Proton donor/acceptor role is filled by His-249.

The protein belongs to the thiolase-like superfamily. HMG-CoA synthase family.

It catalyses the reaction acetoacetyl-CoA + acetyl-CoA + H2O = (3S)-3-hydroxy-3-methylglutaryl-CoA + CoA + H(+). Its pathway is metabolic intermediate biosynthesis; (R)-mevalonate biosynthesis; (R)-mevalonate from acetyl-CoA: step 2/3. Its function is as follows. Condenses acetyl-CoA with acetoacetyl-CoA to form HMG-CoA, which is the substrate for HMG-CoA reductase. In Dictyostelium discoideum (Social amoeba), this protein is Hydroxymethylglutaryl-CoA synthase A (hgsA).